The following is a 108-amino-acid chain: Urease subunit beta (108 aa).

The protein belongs to the urease beta subunit family. As to quaternary structure, heterotrimer of UreA (gamma), UreB (beta) and UreC (alpha) subunits. Three heterotrimers associate to form the active enzyme.

The protein resides in the cytoplasm. The enzyme catalyses urea + 2 H2O + H(+) = hydrogencarbonate + 2 NH4(+). Its pathway is nitrogen metabolism; urea degradation; CO(2) and NH(3) from urea (urease route): step 1/1. In Chromohalobacter salexigens (strain ATCC BAA-138 / DSM 3043 / CIP 106854 / NCIMB 13768 / 1H11), this protein is Urease subunit beta.